The following is a 122-amino-acid chain: UPF0102 protein Mpe_A3766 (122 aa).

This sequence belongs to the UPF0102 family.

The chain is UPF0102 protein Mpe_A3766 from Methylibium petroleiphilum (strain ATCC BAA-1232 / LMG 22953 / PM1).